The primary structure comprises 396 residues: Phosphoglycerate kinase (396 aa).

Substrate is bound by residues 21-23 (DFN), arginine 36, 59-62 (HLGK), arginine 119, and arginine 156. ATP is bound by residues lysine 206, glycine 294, glutamate 325, and 352 to 355 (GGDS).

Belongs to the phosphoglycerate kinase family. As to quaternary structure, monomer.

Its subcellular location is the cytoplasm. It catalyses the reaction (2R)-3-phosphoglycerate + ATP = (2R)-3-phospho-glyceroyl phosphate + ADP. Its pathway is carbohydrate degradation; glycolysis; pyruvate from D-glyceraldehyde 3-phosphate: step 2/5. This is Phosphoglycerate kinase from Staphylococcus aureus (strain USA300).